Here is a 286-residue protein sequence, read N- to C-terminus: 33 kDa chaperonin (286 aa).

Cystine bridges form between cysteine 225/cysteine 227 and cysteine 258/cysteine 261.

Belongs to the HSP33 family. Under oxidizing conditions two disulfide bonds are formed involving the reactive cysteines. Under reducing conditions zinc is bound to the reactive cysteines and the protein is inactive.

The protein localises to the cytoplasm. Functionally, redox regulated molecular chaperone. Protects both thermally unfolding and oxidatively damaged proteins from irreversible aggregation. Plays an important role in the bacterial defense system toward oxidative stress. This Shewanella oneidensis (strain ATCC 700550 / JCM 31522 / CIP 106686 / LMG 19005 / NCIMB 14063 / MR-1) protein is 33 kDa chaperonin.